A 490-amino-acid polypeptide reads, in one-letter code: ATP synthase subunit beta, chloroplastic (490 aa).

170-177 (GGXGVGKT) is an ATP binding site.

The protein belongs to the ATPase alpha/beta chains family. In terms of assembly, F-type ATPases have 2 components, CF(1) - the catalytic core - and CF(0) - the membrane proton channel. CF(1) has five subunits: alpha(3), beta(3), gamma(1), delta(1), epsilon(1). CF(0) has four main subunits: a(1), b(1), b'(1) and c(9-12).

The protein localises to the plastid. It is found in the chloroplast thylakoid membrane. It carries out the reaction ATP + H2O + 4 H(+)(in) = ADP + phosphate + 5 H(+)(out). Produces ATP from ADP in the presence of a proton gradient across the membrane. The catalytic sites are hosted primarily by the beta subunits. The protein is ATP synthase subunit beta, chloroplastic of Ipomoea coccinea (Scarlet morning-glory).